A 241-amino-acid chain; its full sequence is Small ribosomal subunit protein uS3 (241 aa).

Residues 39–107 enclose the KH type-2 domain; it reads IRTYLKKELY…PLSVNIKEEK (69 aa). Positions 214-241 are disordered; that stretch reads AEVKEEQQKEGARRPKRAPKRENSGKAE. Positions 215 to 226 are enriched in basic and acidic residues; the sequence is EVKEEQQKEGAR.

It belongs to the universal ribosomal protein uS3 family. As to quaternary structure, part of the 30S ribosomal subunit. Forms a tight complex with proteins S10 and S14.

Binds the lower part of the 30S subunit head. Binds mRNA in the 70S ribosome, positioning it for translation. The protein is Small ribosomal subunit protein uS3 of Sulfurimonas denitrificans (strain ATCC 33889 / DSM 1251) (Thiomicrospira denitrificans (strain ATCC 33889 / DSM 1251)).